A 546-amino-acid polypeptide reads, in one-letter code: 3-(3-hydroxy-phenyl)propionate/3-hydroxycinnamic acid hydroxylase 2 (546 aa).

FAD-binding positions include 10–39 (SVAI…VVER) and 278–288 (FVAGRIALVGD).

This sequence belongs to the PheA/TfdB FAD monooxygenase family. Requires FAD as cofactor.

It carries out the reaction 3-(3-hydroxyphenyl)propanoate + NADH + O2 + H(+) = 3-(2,3-dihydroxyphenyl)propanoate + NAD(+) + H2O. The catalysed reaction is (2E)-3-(3-hydroxyphenyl)prop-2-enoate + NADH + O2 + H(+) = (2E)-3-(2,3-dihydroxyphenyl)prop-2-enoate + NAD(+) + H2O. It functions in the pathway aromatic compound metabolism; 3-phenylpropanoate degradation. Functionally, catalyzes the insertion of one atom of molecular oxygen into position 2 of the phenyl ring of 3-(3-hydroxyphenyl)propionate (3-HPP) and hydroxycinnamic acid (3HCI). This Burkholderia vietnamiensis (strain G4 / LMG 22486) (Burkholderia cepacia (strain R1808)) protein is 3-(3-hydroxy-phenyl)propionate/3-hydroxycinnamic acid hydroxylase 2.